Reading from the N-terminus, the 205-residue chain is Holliday junction branch migration complex subunit RuvA (205 aa).

The tract at residues 1–64 (MIGRLRGLLV…EDAQLLYGFI (64 aa)) is domain I. A domain II region spans residues 65-143 (TKQERALFRL…SLMEASAGSE (79 aa)). Residues 144 to 156 (REFMLKSNYTPAP) form a flexible linker region. The tract at residues 157–205 (VINTAEEDAIAALLSLGYKPAQASKAVSAVYQDGMDSETLIKSSLKSML) is domain III.

The protein belongs to the RuvA family. In terms of assembly, homotetramer. Forms an RuvA(8)-RuvB(12)-Holliday junction (HJ) complex. HJ DNA is sandwiched between 2 RuvA tetramers; dsDNA enters through RuvA and exits via RuvB. An RuvB hexamer assembles on each DNA strand where it exits the tetramer. Each RuvB hexamer is contacted by two RuvA subunits (via domain III) on 2 adjacent RuvB subunits; this complex drives branch migration. In the full resolvosome a probable DNA-RuvA(4)-RuvB(12)-RuvC(2) complex forms which resolves the HJ.

It is found in the cytoplasm. Functionally, the RuvA-RuvB-RuvC complex processes Holliday junction (HJ) DNA during genetic recombination and DNA repair, while the RuvA-RuvB complex plays an important role in the rescue of blocked DNA replication forks via replication fork reversal (RFR). RuvA specifically binds to HJ cruciform DNA, conferring on it an open structure. The RuvB hexamer acts as an ATP-dependent pump, pulling dsDNA into and through the RuvAB complex. HJ branch migration allows RuvC to scan DNA until it finds its consensus sequence, where it cleaves and resolves the cruciform DNA. The chain is Holliday junction branch migration complex subunit RuvA from Shewanella sediminis (strain HAW-EB3).